Reading from the N-terminus, the 211-residue chain is Protein FAM167A (211 aa).

2 disordered regions span residues 1-30 (MSVPQIQVEEVAGGEEGPAGTTPPPDDHLR) and 56-108 (EEQT…GKLE). Residues 120 to 153 (LRKELMEMRLQDQQLARQLMRLRSDIHKLKIEQT) are a coiled coil.

Belongs to the FAM167 (SEC) family.

This is Protein FAM167A (FAM167A) from Bos taurus (Bovine).